Reading from the N-terminus, the 203-residue chain is Holliday junction branch migration complex subunit RuvA (203 aa).

A domain I region spans residues 1 to 63; that stretch reads MIGQLSGKVD…EEHIHLYGFL (63 aa). A domain II region spans residues 64-142; the sequence is TLEEKIFFNL…KISSGSAIIK (79 aa). The flexible linker stretch occupies residues 143–149; that stretch reads ESLNIKN. Residues 150-203 form a domain III region; sequence ITPVASNEVIKALVNLGFSRFEAQNAVQGIITQNPEISIDELIKTALKNRNSNF.

It belongs to the RuvA family. Homotetramer. Forms an RuvA(8)-RuvB(12)-Holliday junction (HJ) complex. HJ DNA is sandwiched between 2 RuvA tetramers; dsDNA enters through RuvA and exits via RuvB. An RuvB hexamer assembles on each DNA strand where it exits the tetramer. Each RuvB hexamer is contacted by two RuvA subunits (via domain III) on 2 adjacent RuvB subunits; this complex drives branch migration. In the full resolvosome a probable DNA-RuvA(4)-RuvB(12)-RuvC(2) complex forms which resolves the HJ.

It localises to the cytoplasm. Its function is as follows. The RuvA-RuvB-RuvC complex processes Holliday junction (HJ) DNA during genetic recombination and DNA repair, while the RuvA-RuvB complex plays an important role in the rescue of blocked DNA replication forks via replication fork reversal (RFR). RuvA specifically binds to HJ cruciform DNA, conferring on it an open structure. The RuvB hexamer acts as an ATP-dependent pump, pulling dsDNA into and through the RuvAB complex. HJ branch migration allows RuvC to scan DNA until it finds its consensus sequence, where it cleaves and resolves the cruciform DNA. This chain is Holliday junction branch migration complex subunit RuvA, found in Rickettsia conorii (strain ATCC VR-613 / Malish 7).